A 509-amino-acid chain; its full sequence is ATP synthase subunit alpha (509 aa).

169–176 (GDRQTGKT) contributes to the ATP binding site.

The protein belongs to the ATPase alpha/beta chains family. As to quaternary structure, F-type ATPases have 2 components, CF(1) - the catalytic core - and CF(0) - the membrane proton channel. CF(1) has five subunits: alpha(3), beta(3), gamma(1), delta(1), epsilon(1). CF(0) has three main subunits: a(1), b(2) and c(9-12). The alpha and beta chains form an alternating ring which encloses part of the gamma chain. CF(1) is attached to CF(0) by a central stalk formed by the gamma and epsilon chains, while a peripheral stalk is formed by the delta and b chains.

It is found in the cell inner membrane. It catalyses the reaction ATP + H2O + 4 H(+)(in) = ADP + phosphate + 5 H(+)(out). Produces ATP from ADP in the presence of a proton gradient across the membrane. The alpha chain is a regulatory subunit. The protein is ATP synthase subunit alpha of Brucella abortus (strain S19).